Here is a 282-residue protein sequence, read N- to C-terminus: Pantothenate synthetase (282 aa).

31-38 (MGALHDGH) is a binding site for ATP. H38 functions as the Proton donor in the catalytic mechanism. Q62 lines the (R)-pantoate pocket. Residue Q62 participates in beta-alanine binding. Residue 148 to 151 (GKKD) coordinates ATP. Q154 lines the (R)-pantoate pocket. ATP is bound by residues V177 and 185–188 (KSSR).

It belongs to the pantothenate synthetase family. Homodimer.

It is found in the cytoplasm. It carries out the reaction (R)-pantoate + beta-alanine + ATP = (R)-pantothenate + AMP + diphosphate + H(+). It participates in cofactor biosynthesis; (R)-pantothenate biosynthesis; (R)-pantothenate from (R)-pantoate and beta-alanine: step 1/1. Functionally, catalyzes the condensation of pantoate with beta-alanine in an ATP-dependent reaction via a pantoyl-adenylate intermediate. The polypeptide is Pantothenate synthetase (Staphylococcus saprophyticus subsp. saprophyticus (strain ATCC 15305 / DSM 20229 / NCIMB 8711 / NCTC 7292 / S-41)).